The following is a 157-amino-acid chain: UPF0756 membrane protein ABC2716 (157 aa).

The next 4 helical transmembrane spans lie at 8–28 (FLLL…IIAI), 54–74 (LGVT…DIGF), 84–104 (LYAW…ASGI), and 117–137 (LVLG…GPLI).

It belongs to the UPF0756 family.

The protein localises to the cell membrane. The protein is UPF0756 membrane protein ABC2716 of Shouchella clausii (strain KSM-K16) (Alkalihalobacillus clausii).